The sequence spans 153 residues: Phosphatase NudJ (153 aa).

Positions 3–131 (KPHVTVACVV…LVAESIRCYQ (129 aa)) constitute a Nudix hydrolase domain. The Nudix box motif lies at 36-57 (GHLEADETLVEAAARELWEETG).

Belongs to the Nudix hydrolase family. NudJ subfamily. Monomer. Mg(2+) is required as a cofactor.

This Shigella boydii serotype 4 (strain Sb227) protein is Phosphatase NudJ (nudJ).